Consider the following 178-residue polypeptide: Methyltransferase flvH (178 aa).

The Post-SET domain maps to 120-136 (QPFNCFCGSQNCLGLIA). The Zn(2+) site is built by Cys-124, Cys-126, and Cys-131.

It belongs to the class V-like SAM-binding methyltransferase superfamily.

The enzyme catalyses L-lysine + 2 S-adenosyl-L-methionine = N(6),N(6)-dimethyl-L-lysine + 2 S-adenosyl-L-homocysteine + 2 H(+). Its pathway is secondary metabolite biosynthesis; terpenoid biosynthesis. Methyltransferase; part of the gene cluster that mediates the biosynthesis of flavunoidine, an alkaloidal terpenoid with a tetracyclic cage-like core connected to dimethylcadaverine via a C-N bond and acylated with 5,5-dimethyl-L-pipecolate. The tetracyclic core is synthesized by the terpene cyclase flvE and the cytochrome P450 monooxygenase flvD. The terpene cyclase flvE catalyzes the cyclization of farnesyl pyrophosphate (FPP) to form (1R,4R,5S)-(+)-acoradiene and the cytochrome P450 monooxygenase flvD is then responsible for oxidative conversion of (1R,4R,5S)-(+)-acoradiene into the tetracyclic cage present in the final product flavunoidine. In parallel, the N-methyltransferase flvH dimethylates L-lysine to give N,N-dimethyl-L-Lysin which is decarboxylated by flvG to afford dimethylcadaverine. The terpene cyclase-like protein flvF is the enzyme that attaches the dimethylcadaverine precusor at the C-7 of the tetracyclic cage to yield pre-flavunoidine. The cytochrome monooxygenase flvC hydroxylates the C-10 position of pre-flavunoidine whereas the NRPS flvI acylates the terpenoid core at the hydroxylated C-10 with dimethylpipecolate to yield final flavunoidine. The bifunctional enzyme flvA and the dehydrogenase flvB are responsible for the synthesis of the dimethylpipecolate precursor. The PLP-dependent lyase domain of flvA might use L-O-acetyl-homoserine and alpha-keto-isovalerate to form an intermediary ketone that can cyclize intramolecularly to yield an imine. The imine can be reduced by flvB to yield the 6-carboxylated pipecolate. The C-terminal alpha-KG-dependent oxygenase domain of flvA is then proposed to catalyze the decarboxylation to yield dimethylpipecolate. The chain is Methyltransferase flvH from Aspergillus flavus (strain ATCC 200026 / FGSC A1120 / IAM 13836 / NRRL 3357 / JCM 12722 / SRRC 167).